The following is a 154-amino-acid chain: Major allergen Dau c 1 (154 aa).

Belongs to the BetVI family. As to quaternary structure, homodimer.

In Daucus carota (Wild carrot), this protein is Major allergen Dau c 1.